Here is a 62-residue protein sequence, read N- to C-terminus: Photosystem II reaction center protein Z (62 aa).

A run of 2 helical transmembrane segments spans residues 8 to 28 (AVFALIATSSVLVISVPLVFA) and 41 to 61 (FSGTSLWIGLVFLVAILNSLI).

This sequence belongs to the PsbZ family. As to quaternary structure, PSII is composed of 1 copy each of membrane proteins PsbA, PsbB, PsbC, PsbD, PsbE, PsbF, PsbH, PsbI, PsbJ, PsbK, PsbL, PsbM, PsbT, PsbY, PsbZ, Psb30/Ycf12, at least 3 peripheral proteins of the oxygen-evolving complex and a large number of cofactors. It forms dimeric complexes.

It localises to the plastid. The protein resides in the chloroplast thylakoid membrane. Functionally, may control the interaction of photosystem II (PSII) cores with the light-harvesting antenna, regulates electron flow through the 2 photosystem reaction centers. PSII is a light-driven water plastoquinone oxidoreductase, using light energy to abstract electrons from H(2)O, generating a proton gradient subsequently used for ATP formation. The sequence is that of Photosystem II reaction center protein Z from Hordeum vulgare (Barley).